The sequence spans 398 residues: Succinate--CoA ligase [ADP-forming] subunit beta (398 aa).

The region spanning 9-254 (KAVLREFGVP…ESEEDAKEIE (246 aa)) is the ATP-grasp domain. Residues K46, 53–55 (GRG), E109, S112, and E117 each bind ATP. Residues N209 and D223 each contribute to the Mg(2+) site. Residues N274 and 331–333 (GIM) each bind substrate.

This sequence belongs to the succinate/malate CoA ligase beta subunit family. In terms of assembly, heterotetramer of two alpha and two beta subunits. Mg(2+) serves as cofactor.

It carries out the reaction succinate + ATP + CoA = succinyl-CoA + ADP + phosphate. The catalysed reaction is GTP + succinate + CoA = succinyl-CoA + GDP + phosphate. The protein operates within carbohydrate metabolism; tricarboxylic acid cycle; succinate from succinyl-CoA (ligase route): step 1/1. Succinyl-CoA synthetase functions in the citric acid cycle (TCA), coupling the hydrolysis of succinyl-CoA to the synthesis of either ATP or GTP and thus represents the only step of substrate-level phosphorylation in the TCA. The beta subunit provides nucleotide specificity of the enzyme and binds the substrate succinate, while the binding sites for coenzyme A and phosphate are found in the alpha subunit. The protein is Succinate--CoA ligase [ADP-forming] subunit beta of Rhodopseudomonas palustris (strain HaA2).